The sequence spans 169 residues: Crossover junction endodeoxyribonuclease RuvC (169 aa).

Catalysis depends on residues aspartate 11, glutamate 71, and aspartate 143. 3 residues coordinate Mg(2+): aspartate 11, glutamate 71, and aspartate 143.

The protein belongs to the RuvC family. As to quaternary structure, homodimer which binds Holliday junction (HJ) DNA. The HJ becomes 2-fold symmetrical on binding to RuvC with unstacked arms; it has a different conformation from HJ DNA in complex with RuvA. In the full resolvosome a probable DNA-RuvA(4)-RuvB(12)-RuvC(2) complex forms which resolves the HJ. It depends on Mg(2+) as a cofactor.

It is found in the cytoplasm. It catalyses the reaction Endonucleolytic cleavage at a junction such as a reciprocal single-stranded crossover between two homologous DNA duplexes (Holliday junction).. In terms of biological role, the RuvA-RuvB-RuvC complex processes Holliday junction (HJ) DNA during genetic recombination and DNA repair. Endonuclease that resolves HJ intermediates. Cleaves cruciform DNA by making single-stranded nicks across the HJ at symmetrical positions within the homologous arms, yielding a 5'-phosphate and a 3'-hydroxyl group; requires a central core of homology in the junction. The consensus cleavage sequence is 5'-(A/T)TT(C/G)-3'. Cleavage occurs on the 3'-side of the TT dinucleotide at the point of strand exchange. HJ branch migration catalyzed by RuvA-RuvB allows RuvC to scan DNA until it finds its consensus sequence, where it cleaves and resolves the cruciform DNA. The chain is Crossover junction endodeoxyribonuclease RuvC from Rhizobium johnstonii (strain DSM 114642 / LMG 32736 / 3841) (Rhizobium leguminosarum bv. viciae).